The following is a 157-amino-acid chain: Crossover junction endodeoxyribonuclease RuvC (157 aa).

Catalysis depends on residues Asp9, Glu70, and Asp142. Residues Asp9, Glu70, and Asp142 each coordinate Mg(2+).

The protein belongs to the RuvC family. As to quaternary structure, homodimer which binds Holliday junction (HJ) DNA. The HJ becomes 2-fold symmetrical on binding to RuvC with unstacked arms; it has a different conformation from HJ DNA in complex with RuvA. In the full resolvosome a probable DNA-RuvA(4)-RuvB(12)-RuvC(2) complex forms which resolves the HJ. Mg(2+) serves as cofactor.

Its subcellular location is the cytoplasm. The enzyme catalyses Endonucleolytic cleavage at a junction such as a reciprocal single-stranded crossover between two homologous DNA duplexes (Holliday junction).. Its function is as follows. The RuvA-RuvB-RuvC complex processes Holliday junction (HJ) DNA during genetic recombination and DNA repair. Endonuclease that resolves HJ intermediates. Cleaves cruciform DNA by making single-stranded nicks across the HJ at symmetrical positions within the homologous arms, yielding a 5'-phosphate and a 3'-hydroxyl group; requires a central core of homology in the junction. The consensus cleavage sequence is 5'-(A/T)TT(C/G)-3'. Cleavage occurs on the 3'-side of the TT dinucleotide at the point of strand exchange. HJ branch migration catalyzed by RuvA-RuvB allows RuvC to scan DNA until it finds its consensus sequence, where it cleaves and resolves the cruciform DNA. The polypeptide is Crossover junction endodeoxyribonuclease RuvC (Cyanothece sp. (strain PCC 7425 / ATCC 29141)).